The following is a 383-amino-acid chain: Xylose/arabinose import ATP-binding protein XacK (383 aa).

Residues 4–240 (LTLDDVTKVY…PNNLFVAGFI (237 aa)) enclose the ABC transporter domain. Position 41 to 48 (41 to 48 (GPSGCGKS)) interacts with ATP.

Belongs to the ABC transporter superfamily. Carbohydrate uptake transporter-1 (CUT1) (TC 3.A.1.1) family. In terms of assembly, the complex is composed of two ATP-binding proteins (XacJ and XacK), two transmembrane proteins (XacH and XacI) and a solute-binding protein (XacG).

The protein resides in the cell membrane. It catalyses the reaction D-xylose(out) + ATP + H2O = D-xylose(in) + ADP + phosphate + H(+). The catalysed reaction is L-arabinose(out) + ATP + H2O = L-arabinose(in) + ADP + phosphate + H(+). Functionally, part of the ABC transporter complex XacGHIJK involved in the uptake of xylose and arabinose. Responsible for energy coupling to the transport system. This chain is Xylose/arabinose import ATP-binding protein XacK, found in Haloferax volcanii (strain ATCC 29605 / DSM 3757 / JCM 8879 / NBRC 14742 / NCIMB 2012 / VKM B-1768 / DS2) (Halobacterium volcanii).